Reading from the N-terminus, the 190-residue chain is Dirigent protein 15 (190 aa).

An N-terminal signal peptide occupies residues 1-19 (MKSTLIIFFTLCLSMAVMA). N-linked (GlcNAc...) asparagine glycosylation is found at asparagine 63 and asparagine 128.

This sequence belongs to the plant dirigent protein family. As to quaternary structure, homodimer.

The protein localises to the secreted. It localises to the extracellular space. It is found in the apoplast. Functionally, dirigent proteins impart stereoselectivity on the phenoxy radical-coupling reaction, yielding optically active lignans from two molecules of coniferyl alcohol in the biosynthesis of lignans, flavonolignans, and alkaloids and thus plays a central role in plant secondary metabolism. This is Dirigent protein 15 (DIR15) from Arabidopsis thaliana (Mouse-ear cress).